Consider the following 301-residue polypeptide: uncharacterized protein (301 aa).

A compositionally biased stretch (basic and acidic residues) spans Glu16–Leu28. The segment at Glu16–Glu38 is disordered. Residues Gln29–Glu38 show a composition bias toward polar residues. A G-patch domain is found at Lys252–Lys301.

This is an uncharacterized protein from Schizosaccharomyces pombe (strain 972 / ATCC 24843) (Fission yeast).